Consider the following 95-residue polypeptide: Co-chaperonin GroES (95 aa).

It belongs to the GroES chaperonin family. As to quaternary structure, heptamer of 7 subunits arranged in a ring. Interacts with the chaperonin GroEL.

The protein resides in the cytoplasm. Functionally, together with the chaperonin GroEL, plays an essential role in assisting protein folding. The GroEL-GroES system forms a nano-cage that allows encapsulation of the non-native substrate proteins and provides a physical environment optimized to promote and accelerate protein folding. GroES binds to the apical surface of the GroEL ring, thereby capping the opening of the GroEL channel. The chain is Co-chaperonin GroES from Geobacter metallireducens (strain ATCC 53774 / DSM 7210 / GS-15).